We begin with the raw amino-acid sequence, 591 residues long: Transcription factor COE1 (591 aa).

An N-acetylmethionine modification is found at Met1. The segment covering 1 to 14 (MFGIQESIQRSGSS) has biased composition (polar residues). Residues 1 to 21 (MFGIQESIQRSGSSMKEEPLG) form a disordered region. A Glycyl lysine isopeptide (Lys-Gly) (interchain with G-Cter in SUMO1); alternate cross-link involves residue Lys16. Residue Lys16 forms a Glycyl lysine isopeptide (Lys-Gly) (interchain with G-Cter in SUMO2); alternate linkage. The segment at 63–66 (RKSN) is interaction with DNA. The C5-type zinc-finger motif lies at 151–170 (CRVLLTHEIMCSRCCDKKSC). Interaction with DNA regions lie at residues 197–204 (NCLKNAGN) and 236–239 (NNSK). Positions 262 to 345 (PCIKAISPSE…KGTPGRFIYT (84 aa)) constitute an IPT/TIG domain. Residues 457–480 (GFTRNSSSVSPHGYVPSTTPQQTN) form a disordered region.

This sequence belongs to the COE family. As to quaternary structure, homodimer. Interacts with ZNF423 and ZNF521, leading to prevent EBF1 to bind DNA and activate target genes. Interacts with CCR4-NOT component CNOT3. In terms of assembly, (Microbial infection) Interacts with Epstein-barr virus protein EBNA2.

Its subcellular location is the nucleus. Key pioneer transcription factor of B-cell specification and commitment. Recognizes variations of the palindromic sequence 5'-ATTCCCNNGGGAATT-3'. Operates in a transcription factor network to activate B-cell-specific genes and repress genes associated with alternative cell fates. For instance, positively regulates many B-cell specific genes including BCR or CD40 while repressing genes that direct cells into alternative lineages, including GATA3 and TCF7 for the T-cell lineage. In addition to its role during lymphopoiesis, controls the thermogenic gene program in adipocytes during development and in response to environmental cold. In terms of biological role, (Microbial infection) Acts as a chromatin anchor for Epstein-Barr virus EBNA2 to mediate the assembly of EBNA2 chromatin complexes in B-cells. In addition, binds to the viral LMP1 proximal promoter and promotes its expression during latency. The sequence is that of Transcription factor COE1 (EBF1) from Homo sapiens (Human).